A 396-amino-acid polypeptide reads, in one-letter code: MAAVGAGGSTAAPGPGAVSAGALEPGTASAAHRRLKYISLAVLVVQNASLILSIRYARTLPGDRFFATTAVVMAEVLKGLTCLLLLFAQKRGNVKHLVLFLHEAVLVQYVDTLKLAVPSLIYTLQNNLQYVAISNLPAATFQVTYQLKILTTALFSVLMLNRSLSRLQWASLLLLFTGVAIVQAQQAGGGGPRPLDQNPGAGLAAVVASCLSSGFAGVYFEKILKGSSGSVWLRNLQLGLFGTALGLVGLWWAEGTAVATRGFFFGYTPAVWGVVLNQAFGGLLVAVVVKYADNILKGFATSLSIVLSTVASIRLFGFHVDPLFALGAGLVIGAVYLYSLPRGAAKAIASASASASGPCVHQQPPGQPPPPQLSSHRGDLITEPFLPKLLTKVKGS.

A run of 10 helical transmembrane segments spans residues 3-23, 37-57, 65-85, 97-117, 140-160, 169-189, 200-220, 238-258, 269-289, and 315-335; these read AVGA…AGAL, YISL…IRYA, FFAT…CLLL, LVLF…KLAV, TFQV…VLML, WASL…QAGG, GAGL…GVYF, LGLF…GTAV, PAVW…AVVV, and LFGF…IGAV. Residues 358 to 379 form a disordered region; the sequence is PCVHQQPPGQPPPPQLSSHRGD. An ER retention motif motif is present at residues 392–396; it reads KVKGS.

Belongs to the nucleotide-sugar transporter family. SLC35A subfamily. In terms of assembly, interacts with SLC35A3; the interaction is reduced in the presence of SLC35A4. Found in a complex with SLC35A3 and SLC35A4. Interacts with B4GALT4.

The protein localises to the endoplasmic reticulum membrane. It is found in the golgi apparatus membrane. It carries out the reaction UMP(out) + UDP-alpha-D-galactose(in) = UMP(in) + UDP-alpha-D-galactose(out). The enzyme catalyses UDP-N-acetyl-alpha-D-galactosamine(in) + UMP(out) = UDP-N-acetyl-alpha-D-galactosamine(out) + UMP(in). It catalyses the reaction UMP(out) + UDP-alpha-D-glucose(in) = UMP(in) + UDP-alpha-D-glucose(out). The catalysed reaction is UMP(out) + UDP-N-acetyl-alpha-D-glucosamine(in) = UMP(in) + UDP-N-acetyl-alpha-D-glucosamine(out). It carries out the reaction UDP-alpha-D-galactose(in) + AMP(out) = UDP-alpha-D-galactose(out) + AMP(in). The enzyme catalyses UDP-alpha-D-galactose(in) + CMP(out) = UDP-alpha-D-galactose(out) + CMP(in). It catalyses the reaction UDP-N-acetyl-alpha-D-galactosamine(out) + UDP-alpha-D-galactose(in) = UDP-N-acetyl-alpha-D-galactosamine(in) + UDP-alpha-D-galactose(out). The catalysed reaction is UDP-N-acetyl-alpha-D-glucosamine(out) + UDP-alpha-D-galactose(in) = UDP-N-acetyl-alpha-D-glucosamine(in) + UDP-alpha-D-galactose(out). It carries out the reaction UDP-alpha-D-galactose(in) + UDP-alpha-D-glucose(out) = UDP-alpha-D-galactose(out) + UDP-alpha-D-glucose(in). The enzyme catalyses UMP(out) + CMP(in) = UMP(in) + CMP(out). It catalyses the reaction UMP(out) + AMP(in) = UMP(in) + AMP(out). Transports uridine diphosphate galactose (UDP-galactose) from the cytosol into the Golgi apparatus, functioning as an antiporter that exchanges UDP-galactose for UMP. It is also able to exchange UDP-galactose for AMP and CMP, and to transport UDP-N-acetylgalactosamine (UDP-GalNAc) and other nucleotide sugars. As a provider of UDP-galactose to galactosyltransferases present in the Golgi apparatus, it is necessary for globotriaosylceramide/globoside (Gb3Cer) synthesis from lactosylceramide. This Homo sapiens (Human) protein is UDP-galactose translocator.